Reading from the N-terminus, the 174-residue chain is Gamma-crystallin F (174 aa).

Beta/gamma crystallin 'Greek key' domains follow at residues 2–40 (GKIT…RVDS) and 41–83 (GCWM…HLIP). The connecting peptide stretch occupies residues 84–87 (HSSS). Beta/gamma crystallin 'Greek key' domains lie at 88–128 (HRIR…HVIE) and 129–171 (GYWV…RRIM).

The protein belongs to the beta/gamma-crystallin family.

In terms of biological role, crystallins are the dominant structural components of the vertebrate eye lens. This chain is Gamma-crystallin F (Crygf), found in Rattus norvegicus (Rat).